Reading from the N-terminus, the 259-residue chain is Short-chain dehydrogenase reductase 5 (259 aa).

12 to 36 is a binding site for NAD(+); that stretch reads IITGGASGIGAEAARLFTDHGAKVV. A substrate-binding site is contributed by Ser144. The Proton acceptor role is filled by Tyr157.

The protein belongs to the short-chain dehydrogenases/reductases (SDR) family.

This is Short-chain dehydrogenase reductase 5 (SDR5) from Arabidopsis thaliana (Mouse-ear cress).